The sequence spans 278 residues: Indole-3-glycerol phosphate synthase (278 aa).

The protein belongs to the TrpC family.

It carries out the reaction 1-(2-carboxyphenylamino)-1-deoxy-D-ribulose 5-phosphate + H(+) = (1S,2R)-1-C-(indol-3-yl)glycerol 3-phosphate + CO2 + H2O. It functions in the pathway amino-acid biosynthesis; L-tryptophan biosynthesis; L-tryptophan from chorismate: step 4/5. In Pseudomonas fluorescens (strain ATCC BAA-477 / NRRL B-23932 / Pf-5), this protein is Indole-3-glycerol phosphate synthase.